The chain runs to 180 residues: Large ribosomal subunit protein uL5 (180 aa).

Belongs to the universal ribosomal protein uL5 family. As to quaternary structure, part of the 50S ribosomal subunit; part of the 5S rRNA/L5/L18/L25 subcomplex. Contacts the 5S rRNA and the P site tRNA. Forms a bridge to the 30S subunit in the 70S ribosome.

Functionally, this is one of the proteins that bind and probably mediate the attachment of the 5S RNA into the large ribosomal subunit, where it forms part of the central protuberance. In the 70S ribosome it contacts protein S13 of the 30S subunit (bridge B1b), connecting the 2 subunits; this bridge is implicated in subunit movement. Contacts the P site tRNA; the 5S rRNA and some of its associated proteins might help stabilize positioning of ribosome-bound tRNAs. This chain is Large ribosomal subunit protein uL5, found in Lactiplantibacillus plantarum (strain ATCC BAA-793 / NCIMB 8826 / WCFS1) (Lactobacillus plantarum).